We begin with the raw amino-acid sequence, 227 residues long: Urease accessory protein UreF (227 aa).

The protein belongs to the UreF family. UreD, UreF and UreG form a complex that acts as a GTP-hydrolysis-dependent molecular chaperone, activating the urease apoprotein by helping to assemble the nickel containing metallocenter of UreC. The UreE protein probably delivers the nickel.

Its subcellular location is the cytoplasm. Functionally, required for maturation of urease via the functional incorporation of the urease nickel metallocenter. In Actinobacillus pleuropneumoniae serotype 3 (strain JL03), this protein is Urease accessory protein UreF.